The primary structure comprises 293 residues: Elongation factor Ts (293 aa).

An involved in Mg(2+) ion dislocation from EF-Tu region spans residues 80 to 83 (TDFV).

Belongs to the EF-Ts family.

It localises to the cytoplasm. Associates with the EF-Tu.GDP complex and induces the exchange of GDP to GTP. It remains bound to the aminoacyl-tRNA.EF-Tu.GTP complex up to the GTP hydrolysis stage on the ribosome. The protein is Elongation factor Ts of Enterococcus faecalis (strain ATCC 700802 / V583).